The chain runs to 121 residues: uncharacterized protein (121 aa).

The region spanning 10–87 (YIIIVTGVHP…EKLEVDFAFL (78 aa)) is the RRM domain. The disordered stretch occupies residues 90–121 (PERAPRPSISTRSRSQSPEVQHRDRDVAMAEP). The span at 97 to 108 (SISTRSRSQSPE) shows a compositional bias: polar residues. Positions 109 to 121 (VQHRDRDVAMAEP) are enriched in basic and acidic residues.

It is found in the cytoplasm. The protein resides in the nucleus. This is an uncharacterized protein from Schizosaccharomyces pombe (strain 972 / ATCC 24843) (Fission yeast).